A 556-amino-acid polypeptide reads, in one-letter code: MGNSCRGSFKDKLDEGDNNKPEDYSKTSTTNLSSNSDHSPNAADIIAQEFSKDNNSNNNSKDPALVIPLREPIMRRNPDNQAYYVLGHKTPNIRDIYTLSRKLGQGQFGTTYLCTEIASGVDYACKSISKRKLISKEDVEDVRREIQIMHHLAGHGSIVTIKGAYEDSLYVHIVMELCAGGELFDRIIQRGHYSERKAAELTKIIVGVVEACHSLGVMHRDLKPENFLLVNKDDDFSLKAIDFGLSVFFKPGQIFTDVVGSPYYVAPEVLLKRYGPEADVWTAGVILYILLSGVPPFWAETQQGIFDAVLKGYIDFESDPWPVISDSAKDLIRRMLSSKPAERLTAHEVLRHPWICENGVAPDRALDPAVLSRLKQFSAMNKLKKMALKVIAESLSEEEIAGLREMFQAMDTDNSGAITFDELKAGLRKYGSTLKDTEIHDLMDAADVDNSGTIDYSEFIAATIHLNKLEREEHLVAAFQYFDKDGSGFITIDELQQACVEHGMADVFLEDIIKEVDQNNDGKIDYGEFVEMMQKGNAGVGRRTMRNSLNISMRDA.

Positions 1–40 (MGNSCRGSFKDKLDEGDNNKPEDYSKTSTTNLSSNSDHSP) are disordered. Gly2 carries the N-myristoyl glycine lipid modification. Residues 8–25 (SFKDKLDEGDNNKPEDYS) are compositionally biased toward basic and acidic residues. The segment covering 26–39 (KTSTTNLSSNSDHS) has biased composition (low complexity). In terms of domain architecture, Protein kinase spans 97-355 (YTLSRKLGQG…AHEVLRHPWI (259 aa)). ATP is bound by residues 103–111 (LGQGQFGTT) and Lys126. Asp221 acts as the Proton acceptor in catalysis. A Phosphoserine modification is found at Ser261. Residues 361 to 391 (APDRALDPAVLSRLKQFSAMNKLKKMALKVI) form an autoinhibitory domain region. EF-hand domains lie at 398 to 433 (EEIA…YGST), 434 to 469 (LKDT…LNKL), 470 to 505 (EREE…HGMA), and 509 to 539 (LEDI…GNAG). Positions 411, 413, 415, 422, 447, 449, 451, 453, 458, 483, 485, 487, 494, 517, 519, 521, 523, and 528 each coordinate Ca(2+).

This sequence belongs to the protein kinase superfamily. Ser/Thr protein kinase family. CDPK subfamily.

It localises to the membrane. The enzyme catalyses L-seryl-[protein] + ATP = O-phospho-L-seryl-[protein] + ADP + H(+). The catalysed reaction is L-threonyl-[protein] + ATP = O-phospho-L-threonyl-[protein] + ADP + H(+). Activated by calcium. Autophosphorylation may play an important role in the regulation of the kinase activity. In terms of biological role, may play a role in signal transduction pathways that involve calcium as a second messenger. This is Calcium-dependent protein kinase 5 (CPK5) from Arabidopsis thaliana (Mouse-ear cress).